The following is a 140-amino-acid chain: Profilin-1 (140 aa).

Ala-2 carries the post-translational modification N-acetylalanine. Ser-28 bears the Phosphoserine mark. Lys-54 is covalently cross-linked (Glycyl lysine isopeptide (Lys-Gly) (interchain with G-Cter in SUMO2); alternate). Residue Lys-54 forms a Glycyl lysine isopeptide (Lys-Gly) (interchain with G-Cter in ubiquitin); alternate linkage. A phosphoserine mark is found at Ser-57 and Ser-85. Lys-105 and Lys-108 each carry N6-acetyllysine. The residue at position 129 (Tyr-129) is a Phosphotyrosine. Ser-138 is modified (phosphoserine; by ROCK1).

This sequence belongs to the profilin family. Found in a complex with XPO6, Ran, ACTB and PFN1. Interacts with ACTB. Interacts with VASP. Interacts with HTT. Interacts with SH3BGRL. Occurs in many kinds of cells as a complex with monomeric actin in a 1:1 ratio. Interacts with ACTMAP. Phosphorylation at Ser-138 reduces its affinity for G-actin and blocks its interaction with HTT, reducing its ability to inhibit androgen receptor (AR) and HTT aggregation. Expressed in epididymis (at protein level).

It localises to the cytoplasm. The protein localises to the cytoskeleton. Its function is as follows. Binds to actin and affects the structure of the cytoskeleton. At high concentrations, profilin prevents the polymerization of actin, whereas it enhances it at low concentrations. By binding to PIP2, it inhibits the formation of IP3 and DG. Inhibits androgen receptor (AR) and HTT aggregation and binding of G-actin is essential for its inhibition of AR. The sequence is that of Profilin-1 (PFN1) from Homo sapiens (Human).